Here is a 230-residue protein sequence, read N- to C-terminus: Cysteine S-methyltransferase OspZ (230 aa).

The tract at residues 49-52 (GITR) is interaction with host proteins TAB2, TAB3 and ZRANB3. A92, S98, R107, Q111, Y204, and E208 together coordinate S-adenosyl-L-methionine.

The protein belongs to the NleE/OspZ family. As to quaternary structure, monomer.

Its subcellular location is the secreted. It is found in the host cytoplasm. It localises to the host nucleus. It catalyses the reaction L-cysteinyl-[protein] + S-adenosyl-L-methionine = S-methyl-L-cysteinyl-[protein] + S-adenosyl-L-homocysteine + H(+). Cysteine methyltransferase effector that inhibits host cell NF-kappa-B activation by preventing nuclear translocation of host protein RELA/p65. Acts by mediating cysteine methylation of host proteins TAB2 and TAB3: methylation of a conserved cysteine residue of the RanBP2-type zinc finger (NZF) of TAB2 and TAB3 disrupts zinc-binding, thereby inactivating the ubiquitin chain-binding activity of TAB2 and TAB3, leading to NF-kappa-B inactivation. Also mediates cysteine methylation of host protein ZRANB3, inactivating its ability to bind ubiquitin chains. The sequence is that of Cysteine S-methyltransferase OspZ from Shigella boydii.